The primary structure comprises 226 residues: tRNA (guanine-N(1)-)-methyltransferase (226 aa).

S-adenosyl-L-methionine is bound by residues glycine 112 and 132–137 (IGDYVL).

This sequence belongs to the RNA methyltransferase TrmD family. In terms of assembly, homodimer.

The protein localises to the cytoplasm. The catalysed reaction is guanosine(37) in tRNA + S-adenosyl-L-methionine = N(1)-methylguanosine(37) in tRNA + S-adenosyl-L-homocysteine + H(+). In terms of biological role, specifically methylates guanosine-37 in various tRNAs. In Christiangramia forsetii (strain DSM 17595 / CGMCC 1.15422 / KT0803) (Gramella forsetii), this protein is tRNA (guanine-N(1)-)-methyltransferase.